Here is a 159-residue protein sequence, read N- to C-terminus: ATP synthase subunit b 2 (159 aa).

A helical membrane pass occupies residues 1-21 (MDATFWAFIALVIFVAIVVYM).

Belongs to the ATPase B chain family. As to quaternary structure, F-type ATPases have 2 components, F(1) - the catalytic core - and F(0) - the membrane proton channel. F(1) has five subunits: alpha(3), beta(3), gamma(1), delta(1), epsilon(1). F(0) has three main subunits: a(1), b(2) and c(10-14). The alpha and beta chains form an alternating ring which encloses part of the gamma chain. F(1) is attached to F(0) by a central stalk formed by the gamma and epsilon chains, while a peripheral stalk is formed by the delta and b chains.

The protein resides in the cell inner membrane. In terms of biological role, f(1)F(0) ATP synthase produces ATP from ADP in the presence of a proton or sodium gradient. F-type ATPases consist of two structural domains, F(1) containing the extramembraneous catalytic core and F(0) containing the membrane proton channel, linked together by a central stalk and a peripheral stalk. During catalysis, ATP synthesis in the catalytic domain of F(1) is coupled via a rotary mechanism of the central stalk subunits to proton translocation. Its function is as follows. Component of the F(0) channel, it forms part of the peripheral stalk, linking F(1) to F(0). The protein is ATP synthase subunit b 2 of Brucella abortus (strain S19).